Reading from the N-terminus, the 440-residue chain is MEYTPPPKPQLSSRANAFSIAALMSSGSSKDKEAAESTIKPLEQFVEKSSCAQPLSDLSGLEPHGDFSGSPSALCTEPLIPTTPIIPSEEMAKISCSLETKELWDKFHELGTEMIITKSGRRMFPTIRVSFSGVDPEAKYIVLMDIVPVDNKRYRYAYHRSSWLVAGKADPPLPARLYVHPDSPFTGEQLMKQMVSFEKVKLTNNELDQHGHIILNSMHKYQPRVHIIKKKDHTASLLNLKSEEFRTFIFPETVFTAVTAYQNQLITKLKIDSNPFAKGFRDSSRLTDIERESVESLIQKHSYARSPIRTYGGEDDLGDDSQATQSRGSAFTTSDNLSLSSWVSSSTSFPGFQHPQSLSALGTSTASIATPIPHPIQGSLPPYSRLGMPLTPSAIASSMQGTGPTFPSFHMPRYHHYFQQGPYAAIQGLRHSSAVMTPFV.

A DNA-binding region (T-box) is located at residues 103-282 (LWDKFHELGT…SNPFAKGFRD (180 aa)). Residues 308–333 (IRTYGGEDDLGDDSQATQSRGSAFTT) form a disordered region. Residues 321-333 (SQATQSRGSAFTT) show a composition bias toward polar residues.

The protein resides in the nucleus. Acts as a transcriptional regulator involved in heart developmental processes. This chain is T-box transcription factor TBX20 (TBX20), found in Gallus gallus (Chicken).